A 446-amino-acid polypeptide reads, in one-letter code: Divalent metal cation transporter MntH (446 aa).

Transmembrane regions (helical) follow at residues 32–52, 59–79, 107–127, 139–159, 168–188, 210–230, 264–284, 303–323, 355–375, 381–401, and 420–440; these read FSFL…GNWI, AQFG…AMLL, AFVF…AEVI, IPLL…LFIM, AIVG…VFIA, GALF…NLYL, SIAF…FFGV, PLLG…ALLA, LITR…FNSN, QLLV…LIPL, and VNII…YLII.

It belongs to the NRAMP family.

It is found in the cell membrane. Functionally, h(+)-stimulated, divalent metal cation uptake system. The chain is Divalent metal cation transporter MntH from Staphylococcus saprophyticus subsp. saprophyticus (strain ATCC 15305 / DSM 20229 / NCIMB 8711 / NCTC 7292 / S-41).